We begin with the raw amino-acid sequence, 487 residues long: MRGNLRRPGPAGTAGPGRTGIRTSADGGRARPRTGAGTGVRAGVRSGVVGVGAGIRTGVRWKISAAIALVGALVALALSLVVHNAARVSMLDNARDLADERIQVAERMYEAGRAQSFGVKLDDPAIPRDLMMKVTQGRRATYVADGPHGVPDIWAAVPLKDGRVLSLHTRFTDRSADIMKDLDQALIIGSIAVVFGGSALGVLIGGQLSRRLRKAAAAANQVAQGERDVRVRDAIGGVVRDETDDLARAVDAMADALQQRIEAERRVTADIAHELRTPVTGLLTAAELLPPGRPTELVRDRAQAMRTLVEDVLEVARLDGASERAELQDIMLGEFVSRRVAAKDADIEVRVVHESEVTTDPRRLERVLFNLLANAARHGKPPIEVSVEGRVIRVRDHGPGFPEELLADGPRRFRTGSTDRAGHGHGLGLTIAAGQARVLGARLTFRNVRPAGAPGDVPAEGAVAVLWLPEHAPTNTGSFPMLPLSGG.

Over residues methionine 1–alanine 11 the composition is skewed to low complexity. The segment at methionine 1–arginine 41 is disordered. The next 2 helical transmembrane spans lie at isoleucine 63–histidine 83 and alanine 185–glycine 205. The HAMP domain maps to glycine 206–glutamate 262. The region spanning aspartate 270 to alanine 472 is the Histidine kinase domain. Histidine 273 is subject to Phosphohistidine; by autocatalysis.

The protein localises to the cell membrane. It carries out the reaction ATP + protein L-histidine = ADP + protein N-phospho-L-histidine.. The chain is Sensor protein CseC (cseC) from Streptomyces avermitilis (strain ATCC 31267 / DSM 46492 / JCM 5070 / NBRC 14893 / NCIMB 12804 / NRRL 8165 / MA-4680).